A 304-amino-acid polypeptide reads, in one-letter code: ATP synthase gamma chain (304 aa).

It belongs to the ATPase gamma chain family. As to quaternary structure, F-type ATPases have 2 components, CF(1) - the catalytic core - and CF(0) - the membrane proton channel. CF(1) has five subunits: alpha(3), beta(3), gamma(1), delta(1), epsilon(1). CF(0) has three main subunits: a, b and c.

The protein localises to the cell membrane. Functionally, produces ATP from ADP in the presence of a proton gradient across the membrane. The gamma chain is believed to be important in regulating ATPase activity and the flow of protons through the CF(0) complex. In Mycobacterium marinum (strain ATCC BAA-535 / M), this protein is ATP synthase gamma chain.